The chain runs to 502 residues: Chromosomal replication initiator protein DnaA (502 aa).

Residues 1 to 112 form a domain I, interacts with DnaA modulators region; it reads MADDLSLGFT…PSTDHIDDNS (112 aa). The tract at residues 113 to 161 is domain II; it reads SSADVLLTDDCGTDTDENYGEPLTGEYQGLPTYFTERPHHTESTVTGGT. The segment at 162–378 is domain III, AAA+ region; sequence SLNRRYTFET…GALIRVTAFA (217 aa). Residues glycine 206, glycine 208, lysine 209, and threonine 210 each coordinate ATP. The tract at residues 379 to 502 is domain IV, binds dsDNA; it reads SLNKTAIDKA…TTRIRQRSKR (124 aa).

It belongs to the DnaA family. Oligomerizes as a right-handed, spiral filament on DNA at oriC.

The protein localises to the cytoplasm. Functionally, plays an essential role in the initiation and regulation of chromosomal replication. ATP-DnaA binds to the origin of replication (oriC) to initiate formation of the DNA replication initiation complex once per cell cycle. Binds the DnaA box (a 9 base pair repeat at the origin) and separates the double-stranded (ds)DNA. Forms a right-handed helical filament on oriC DNA; dsDNA binds to the exterior of the filament while single-stranded (ss)DNA is stabiized in the filament's interior. The ATP-DnaA-oriC complex binds and stabilizes one strand of the AT-rich DNA unwinding element (DUE), permitting loading of DNA polymerase. After initiation quickly degrades to an ADP-DnaA complex that is not apt for DNA replication. Binds acidic phospholipids. The polypeptide is Chromosomal replication initiator protein DnaA (Mycobacterium leprae (strain TN)).